Reading from the N-terminus, the 150-residue chain is UPF0178 protein Sbal195_1808 (150 aa).

Belongs to the UPF0178 family.

The polypeptide is UPF0178 protein Sbal195_1808 (Shewanella baltica (strain OS195)).